Here is a 261-residue protein sequence, read N- to C-terminus: tRNA pseudouridine synthase A (261 aa).

Asp-52 (nucleophile) is an active-site residue. Substrate is bound at residue Tyr-110.

This sequence belongs to the tRNA pseudouridine synthase TruA family. As to quaternary structure, homodimer.

It carries out the reaction uridine(38/39/40) in tRNA = pseudouridine(38/39/40) in tRNA. Functionally, formation of pseudouridine at positions 38, 39 and 40 in the anticodon stem and loop of transfer RNAs. The polypeptide is tRNA pseudouridine synthase A (Coxiella burnetii (strain CbuK_Q154) (Coxiella burnetii (strain Q154))).